A 458-amino-acid polypeptide reads, in one-letter code: LysM domain-containing protein ARB_05157 (458 aa).

A signal peptide spans 1 to 19 (MVSLKVCFLLLASSELAFG). Positions 157-203 (AFHLVKQGEDCGTISATYGITSAQFLAWNPSAGKDCTGLWANAYACV) constitute a LysM 1 domain. Residues 210-232 (PPKTTSQAPQPTPTKPSNGIETP) are disordered. Polar residues predominate over residues 212 to 229 (KTTSQAPQPTPTKPSNGI). 3 LysM domains span residues 245-291 (KFHL…YACV), 325-371 (KFYL…YSCV), and 409-455 (KFHF…YLCV).

The protein localises to the secreted. Its function is as follows. Might have a role in sequestration of chitin oligosaccharides (breakdown products of fungal cell walls that are released during invasion and act as triggers of host immunity) to dampen host defense. This Arthroderma benhamiae (strain ATCC MYA-4681 / CBS 112371) (Trichophyton mentagrophytes) protein is LysM domain-containing protein ARB_05157.